The sequence spans 333 residues: 4-hydroxy-3-methylbut-2-enyl diphosphate reductase (333 aa).

[4Fe-4S] cluster is bound at residue C33. Residues H62 and H95 each contribute to the (2E)-4-hydroxy-3-methylbut-2-enyl diphosphate site. H62 and H95 together coordinate dimethylallyl diphosphate. The isopentenyl diphosphate site is built by H62 and H95. C117 contacts [4Fe-4S] cluster. A (2E)-4-hydroxy-3-methylbut-2-enyl diphosphate-binding site is contributed by H145. H145 is a binding site for dimethylallyl diphosphate. Residue H145 participates in isopentenyl diphosphate binding. Catalysis depends on E147, which acts as the Proton donor. T186 contacts (2E)-4-hydroxy-3-methylbut-2-enyl diphosphate. C216 serves as a coordination point for [4Fe-4S] cluster. (2E)-4-hydroxy-3-methylbut-2-enyl diphosphate is bound by residues S244, S245, N246, and S289. Positions 244, 245, 246, and 289 each coordinate dimethylallyl diphosphate. Residues S244, S245, N246, and S289 each coordinate isopentenyl diphosphate.

Belongs to the IspH family. Requires [4Fe-4S] cluster as cofactor.

It catalyses the reaction isopentenyl diphosphate + 2 oxidized [2Fe-2S]-[ferredoxin] + H2O = (2E)-4-hydroxy-3-methylbut-2-enyl diphosphate + 2 reduced [2Fe-2S]-[ferredoxin] + 2 H(+). It carries out the reaction dimethylallyl diphosphate + 2 oxidized [2Fe-2S]-[ferredoxin] + H2O = (2E)-4-hydroxy-3-methylbut-2-enyl diphosphate + 2 reduced [2Fe-2S]-[ferredoxin] + 2 H(+). It participates in isoprenoid biosynthesis; dimethylallyl diphosphate biosynthesis; dimethylallyl diphosphate from (2E)-4-hydroxy-3-methylbutenyl diphosphate: step 1/1. It functions in the pathway isoprenoid biosynthesis; isopentenyl diphosphate biosynthesis via DXP pathway; isopentenyl diphosphate from 1-deoxy-D-xylulose 5-phosphate: step 6/6. Functionally, catalyzes the conversion of 1-hydroxy-2-methyl-2-(E)-butenyl 4-diphosphate (HMBPP) into a mixture of isopentenyl diphosphate (IPP) and dimethylallyl diphosphate (DMAPP). Acts in the terminal step of the DOXP/MEP pathway for isoprenoid precursor biosynthesis. The sequence is that of 4-hydroxy-3-methylbut-2-enyl diphosphate reductase from Corynebacterium diphtheriae (strain ATCC 700971 / NCTC 13129 / Biotype gravis).